The sequence spans 223 residues: Endonuclease V (223 aa).

Mg(2+) contacts are provided by D35 and D103.

This sequence belongs to the endonuclease V family. Requires Mg(2+) as cofactor.

It localises to the cytoplasm. The enzyme catalyses Endonucleolytic cleavage at apurinic or apyrimidinic sites to products with a 5'-phosphate.. Functionally, DNA repair enzyme involved in the repair of deaminated bases. Selectively cleaves double-stranded DNA at the second phosphodiester bond 3' to a deoxyinosine leaving behind the intact lesion on the nicked DNA. The polypeptide is Endonuclease V (Shigella flexneri serotype 5b (strain 8401)).